A 967-amino-acid polypeptide reads, in one-letter code: Regulator of G-protein signaling 3 (967 aa).

The 78-residue stretch at 18-95 folds into the PDZ domain; that stretch reads QITIRRGKDG…EIILLVWRVV (78 aa). The tract at residues 115-135 is disordered; that stretch reads THDLLSPPNKREKNCTHGAPT. Arginine 167 carries the omega-N-methylarginine modification. The segment at 389-705 is disordered; it reads QLAATPTERK…EGGLSLRVQN (317 aa). Composition is skewed to polar residues over residues 476-486, 512-549, and 577-597; these read LPSSKNPSPSQ, SPSSEDIATCQNPPQSPETSTSKDSPPGQGSSPTTEVP, and SSASDQNVLPSQESPPSQGSL. Residues 650 to 676 show a composition bias toward acidic residues; it reads GEDEDAEEGEEGEEGEEDEEDDTNDDN. Over residues 677–687 the composition is skewed to basic and acidic residues; that stretch reads YGDRNEAKRSS. Serine 713, serine 716, serine 748, and serine 777 each carry phosphoserine. Residues 807 to 830 form a disordered region; sequence FRRRNESPGAQPAGKADKTTKSFK. Residues 821 to 830 show a composition bias toward basic and acidic residues; it reads KADKTTKSFK. The RGS domain maps to 842-967; it reads SLEKLLLHKY…INQKKMSPPL (126 aa).

In terms of assembly, binds EFNB1 and EFNB2. Binds the GNB1-GNG2 heterodimer. Binds ESR1. Post-translationally, phosphorylated by cyclic GMP-dependent protein kinase. In terms of processing, ISGylated. Detected in kidney, uterus, ovary, heart, brain, spleen, lung and testis.

It localises to the cytoplasm. It is found in the membrane. Its subcellular location is the nucleus. In terms of biological role, down-regulates signaling from heterotrimeric G-proteins by increasing the GTPase activity of the alpha subunits, thereby driving them into their inactive GDP-bound form. Down-regulates G-protein-mediated release of inositol phosphates and activation of MAP kinases. This Rattus norvegicus (Rat) protein is Regulator of G-protein signaling 3 (Rgs3).